The sequence spans 337 residues: Phosphate acyltransferase (337 aa).

Belongs to the PlsX family. In terms of assembly, homodimer. Probably interacts with PlsY.

It is found in the cytoplasm. The catalysed reaction is a fatty acyl-[ACP] + phosphate = an acyl phosphate + holo-[ACP]. The protein operates within lipid metabolism; phospholipid metabolism. In terms of biological role, catalyzes the reversible formation of acyl-phosphate (acyl-PO(4)) from acyl-[acyl-carrier-protein] (acyl-ACP). This enzyme utilizes acyl-ACP as fatty acyl donor, but not acyl-CoA. This Latilactobacillus sakei subsp. sakei (strain 23K) (Lactobacillus sakei subsp. sakei) protein is Phosphate acyltransferase.